A 412-amino-acid chain; its full sequence is Decapping nuclease RAI1 (412 aa).

E196 provides a ligand contact to a divalent metal cation. C228 and E245 together coordinate substrate. Residues D247, E265, and L266 each contribute to the a divalent metal cation site. The substrate site is built by K267 and Q291.

It belongs to the DXO/Dom3Z family. As to quaternary structure, interacts with exr-1/rat1; the interaction is direct, stabilizes exr-1 protein structure and stimulates its exoribonuclease activity. The interaction also stimulates rai1 pyrophosphohydrolase activity, probably by recruiting it to mRNA substrates. It depends on a divalent metal cation as a cofactor.

The protein localises to the nucleus. It catalyses the reaction a 5'-end NAD(+)-phospho-ribonucleoside in mRNA + H2O = a 5'-end phospho-ribonucleoside in mRNA + NAD(+) + H(+). It carries out the reaction a 5'-end (N(7)-methyl 5'-triphosphoguanosine)-ribonucleoside-ribonucleotide in mRNA + H2O = a (N(7)-methyl 5'-triphosphoguanosine)-nucleoside + a 5'-end phospho-ribonucleoside in mRNA + H(+). The catalysed reaction is a 5'-end triphospho-ribonucleoside in mRNA + H2O = a 5'-end phospho-ribonucleoside in mRNA + diphosphate + H(+). Its function is as follows. Decapping enzyme for NAD-capped RNAs: specifically hydrolyzes the nicotinamide adenine dinucleotide (NAD) cap from a subset of RNAs by removing the entire NAD moiety from the 5'-end of an NAD-capped RNA. The NAD-cap is present at the 5'-end of some RNAs and snoRNAs. In contrast to the canonical 5'-end N7 methylguanosine (m7G) cap, the NAD cap promotes mRNA decay. Also acts as a non-canonical decapping enzyme that removes the entire cap structure of m7G capped or incompletely capped RNAs. Has decapping activity toward incomplete 5'-end m7G cap mRNAs such as unmethylated 5'-end-capped RNA (cap0), while it has no activity toward 2'-O-ribose methylated m7G cap (cap1). Also possesses RNA 5'-pyrophosphohydrolase activity by hydrolyzing the 5'-end triphosphate to release pyrophosphates. Stimulates exoribonuclease activity of Rat1, allowing it to degrade RNAs with stable secondary structure more effectively. This is Decapping nuclease RAI1 (rai1) from Neurospora crassa (strain ATCC 24698 / 74-OR23-1A / CBS 708.71 / DSM 1257 / FGSC 987).